Here is a 326-residue protein sequence, read N- to C-terminus: UDP-3-O-acylglucosamine N-acyltransferase (326 aa).

His225 acts as the Proton acceptor in catalysis.

Belongs to the transferase hexapeptide repeat family. LpxD subfamily. As to quaternary structure, homotrimer.

It catalyses the reaction a UDP-3-O-[(3R)-3-hydroxyacyl]-alpha-D-glucosamine + a (3R)-hydroxyacyl-[ACP] = a UDP-2-N,3-O-bis[(3R)-3-hydroxyacyl]-alpha-D-glucosamine + holo-[ACP] + H(+). It functions in the pathway bacterial outer membrane biogenesis; LPS lipid A biosynthesis. In terms of biological role, catalyzes the N-acylation of UDP-3-O-acylglucosamine using 3-hydroxyacyl-ACP as the acyl donor. Is involved in the biosynthesis of lipid A, a phosphorylated glycolipid that anchors the lipopolysaccharide to the outer membrane of the cell. This chain is UDP-3-O-acylglucosamine N-acyltransferase, found in Acidovorax ebreus (strain TPSY) (Diaphorobacter sp. (strain TPSY)).